The primary structure comprises 86 residues: Anti-adapter protein IraP (86 aa).

Positions 1 to 36 (MKNLIAELLVKLAEKEEESKELVAQVEALEIVVTAL) form a coiled coil.

It belongs to the IraP family. In terms of assembly, interacts with RssB.

It localises to the cytoplasm. Inhibits RpoS proteolysis by regulating RssB activity, thereby increasing the stability of the sigma stress factor RpoS especially during phosphate starvation, but also in stationary phase and during nitrogen starvation. Its effect on RpoS stability is due to its interaction with RssB, which probably blocks the interaction of RssB with RpoS, and the consequent delivery of the RssB-RpoS complex to the ClpXP protein degradation pathway. The polypeptide is Anti-adapter protein IraP (Cronobacter sakazakii (strain ATCC BAA-894) (Enterobacter sakazakii)).